A 130-amino-acid polypeptide reads, in one-letter code: Small ribosomal subunit protein uS11 (130 aa).

The segment at 108–130 (IEDVTPIPHDGTGRPGGKRGRRV) is disordered.

This sequence belongs to the universal ribosomal protein uS11 family. Part of the 30S ribosomal subunit.

In terms of biological role, located on the platform of the 30S subunit. This is Small ribosomal subunit protein uS11 from Methanothermobacter thermautotrophicus (strain ATCC 29096 / DSM 1053 / JCM 10044 / NBRC 100330 / Delta H) (Methanobacterium thermoautotrophicum).